Here is a 317-residue protein sequence, read N- to C-terminus: UV DNA damage endonuclease (317 aa).

Belongs to the uve1/UvsE family.

In terms of biological role, component in a DNA repair pathway. Removal of UV LIGHT damaged nucleotides. Recognizes pyrimidine dimers and cleave a phosphodiester bond immediately 5' to the lesion. The sequence is that of UV DNA damage endonuclease from Bacillus cereus (strain ATCC 10987 / NRS 248).